The chain runs to 528 residues: GMP synthase [glutamine-hydrolyzing] (528 aa).

Residues 13 to 204 (AIVILDFGSQ…VYHICGCEPD (192 aa)) enclose the Glutamine amidotransferase type-1 domain. The active-site Nucleophile is the Cys-90. Active-site residues include His-178 and Glu-180. The GMPS ATP-PPase domain maps to 205–403 (WTTTAFIEEA…LGLPEEIVRR (199 aa)). 232 to 238 (SGGVDSS) contacts ATP.

In terms of assembly, homodimer.

The catalysed reaction is XMP + L-glutamine + ATP + H2O = GMP + L-glutamate + AMP + diphosphate + 2 H(+). It functions in the pathway purine metabolism; GMP biosynthesis; GMP from XMP (L-Gln route): step 1/1. Its function is as follows. Catalyzes the synthesis of GMP from XMP. The sequence is that of GMP synthase [glutamine-hydrolyzing] from Prochlorococcus marinus (strain MIT 9303).